The primary structure comprises 207 residues: Outer-membrane lipoprotein carrier protein (207 aa).

Positions 1-21 are cleaved as a signal peptide; sequence MRAIRMLLVSALTLGSVTAYA.

Belongs to the LolA family. Monomer.

Its subcellular location is the periplasm. Functionally, participates in the translocation of lipoproteins from the inner membrane to the outer membrane. Only forms a complex with a lipoprotein if the residue after the N-terminal Cys is not an aspartate (The Asp acts as a targeting signal to indicate that the lipoprotein should stay in the inner membrane). The protein is Outer-membrane lipoprotein carrier protein of Pseudomonas putida (strain ATCC 47054 / DSM 6125 / CFBP 8728 / NCIMB 11950 / KT2440).